The chain runs to 693 residues: Glycine--tRNA ligase beta subunit (693 aa).

The protein belongs to the class-II aminoacyl-tRNA synthetase family. In terms of assembly, tetramer of two alpha and two beta subunits.

The protein localises to the cytoplasm. The catalysed reaction is tRNA(Gly) + glycine + ATP = glycyl-tRNA(Gly) + AMP + diphosphate. The polypeptide is Glycine--tRNA ligase beta subunit (glyS) (Halalkalibacterium halodurans (strain ATCC BAA-125 / DSM 18197 / FERM 7344 / JCM 9153 / C-125) (Bacillus halodurans)).